Here is a 481-residue protein sequence, read N- to C-terminus: ATP synthase subunit beta (481 aa).

ATP is bound at residue 160-167 (GGAGVGKT).

It belongs to the ATPase alpha/beta chains family. As to quaternary structure, F-type ATPases have 2 components, CF(1) - the catalytic core - and CF(0) - the membrane proton channel. CF(1) has five subunits: alpha(3), beta(3), gamma(1), delta(1), epsilon(1). CF(0) has three main subunits: a(1), b(2) and c(9-12). The alpha and beta chains form an alternating ring which encloses part of the gamma chain. CF(1) is attached to CF(0) by a central stalk formed by the gamma and epsilon chains, while a peripheral stalk is formed by the delta and b chains.

The protein localises to the cell inner membrane. The enzyme catalyses ATP + H2O + 4 H(+)(in) = ADP + phosphate + 5 H(+)(out). Functionally, produces ATP from ADP in the presence of a proton gradient across the membrane. The catalytic sites are hosted primarily by the beta subunits. This chain is ATP synthase subunit beta, found in Anaeromyxobacter sp. (strain Fw109-5).